A 596-amino-acid chain; its full sequence is NADH-quinone oxidoreductase subunit C/D (596 aa).

An NADH dehydrogenase I subunit C region spans residues 1-186; it reads MTDLTAQDAA…DPFELTKAKQ (186 aa). An NADH dehydrogenase I subunit D region spans residues 210-596; sequence DFMFLNLGPN…IDFVMSDVDR (387 aa).

The protein in the N-terminal section; belongs to the complex I 30 kDa subunit family. In the C-terminal section; belongs to the complex I 49 kDa subunit family. NDH-1 is composed of 13 different subunits. Subunits NuoB, CD, E, F, and G constitute the peripheral sector of the complex.

Its subcellular location is the cell inner membrane. The enzyme catalyses a quinone + NADH + 5 H(+)(in) = a quinol + NAD(+) + 4 H(+)(out). Its function is as follows. NDH-1 shuttles electrons from NADH, via FMN and iron-sulfur (Fe-S) centers, to quinones in the respiratory chain. The immediate electron acceptor for the enzyme in this species is believed to be ubiquinone. Couples the redox reaction to proton translocation (for every two electrons transferred, four hydrogen ions are translocated across the cytoplasmic membrane), and thus conserves the redox energy in a proton gradient. The polypeptide is NADH-quinone oxidoreductase subunit C/D (Salmonella dublin (strain CT_02021853)).